Reading from the N-terminus, the 305-residue chain is Oxygen-dependent coproporphyrinogen-III oxidase (305 aa).

A substrate-binding site is contributed by S99. A divalent metal cation contacts are provided by H103 and H113. H113 functions as the Proton donor in the catalytic mechanism. N115–R117 serves as a coordination point for substrate. A divalent metal cation is bound by residues H152 and H182. Residues Y247–E282 form an important for dimerization region. A substrate-binding site is contributed by G265–R267.

This sequence belongs to the aerobic coproporphyrinogen-III oxidase family. In terms of assembly, homodimer. A divalent metal cation is required as a cofactor.

The protein localises to the cytoplasm. The catalysed reaction is coproporphyrinogen III + O2 + 2 H(+) = protoporphyrinogen IX + 2 CO2 + 2 H2O. It participates in porphyrin-containing compound metabolism; protoporphyrin-IX biosynthesis; protoporphyrinogen-IX from coproporphyrinogen-III (O2 route): step 1/1. In terms of biological role, involved in the heme biosynthesis. Catalyzes the aerobic oxidative decarboxylation of propionate groups of rings A and B of coproporphyrinogen-III to yield the vinyl groups in protoporphyrinogen-IX. This Vibrio cholerae serotype O1 (strain ATCC 39541 / Classical Ogawa 395 / O395) protein is Oxygen-dependent coproporphyrinogen-III oxidase.